Reading from the N-terminus, the 91-residue chain is Ixochymostatin (91 aa).

Positions 1–20 are cleaved as a signal peptide; sequence MKTYVLQALLLTLAVAVVRA. 5 cysteine pairs are disulfide-bonded: C34–C70, C43–C66, C48–C62, C53–C90, and C72–C84. One can recognise a TIL domain in the interval 34–90; that stretch reads CAEGETWKECVGSSCAELTCEHPEPSLGCTYDCNYGCYCAPDFFRNANKECVKKDKC.

Belongs to the serine protease inhibitor-like (TIL domain-containing) family. Salivary gland. Midgut.

The protein resides in the secreted. Its function is as follows. Tight-binding competitive inhibitor of chymotrypsin-like proteases; inhibits host chymase, cathepsin G (CTSG) and chymotrypsin. Inhibits chymase-mediated generation of vasoconstrictor peptides: angiotensin II and endothelin I. Reduces chymase-mediated vascular permeability and vascular endothelial-cadherin degradation. This chain is Ixochymostatin, found in Ixodes scapularis (Black-legged tick).